Consider the following 141-residue polypeptide: HTH-type transcriptional repressor NsrR (141 aa).

One can recognise an HTH rrf2-type domain in the interval 2–129 (QLTSFTDYGL…DSHTLADMVE (128 aa)). A DNA-binding region (H-T-H motif) is located at residues 28-51 (ISEVTEVYGVSRNHMVKIINQLSR). 3 residues coordinate [2Fe-2S] cluster: cysteine 91, cysteine 96, and cysteine 102.

It depends on [2Fe-2S] cluster as a cofactor.

In terms of biological role, nitric oxide-sensitive repressor of genes involved in protecting the cell against nitrosative stress. May require iron for activity. The chain is HTH-type transcriptional repressor NsrR from Serratia proteamaculans (strain 568).